The following is a 180-amino-acid chain: NADH-quinone oxidoreductase subunit I (180 aa).

2 4Fe-4S ferredoxin-type domains span residues 50 to 80 (LTRD…LQKA) and 90 to 119 (EFFR…LTPD). Residues C60, C63, C66, C70, C99, C102, C105, and C109 each coordinate [4Fe-4S] cluster.

This sequence belongs to the complex I 23 kDa subunit family. In terms of assembly, NDH-1 is composed of 13 different subunits. Subunits NuoA, H, J, K, L, M, N constitute the membrane sector of the complex. [4Fe-4S] cluster serves as cofactor.

It localises to the cell inner membrane. The catalysed reaction is a quinone + NADH + 5 H(+)(in) = a quinol + NAD(+) + 4 H(+)(out). Its function is as follows. NDH-1 shuttles electrons from NADH, via FMN and iron-sulfur (Fe-S) centers, to quinones in the respiratory chain. The immediate electron acceptor for the enzyme in this species is believed to be ubiquinone. Couples the redox reaction to proton translocation (for every two electrons transferred, four hydrogen ions are translocated across the cytoplasmic membrane), and thus conserves the redox energy in a proton gradient. This chain is NADH-quinone oxidoreductase subunit I, found in Salmonella choleraesuis (strain SC-B67).